A 422-amino-acid polypeptide reads, in one-letter code: Target of rapamycin complex 2 subunit bit61 (422 aa).

Positions 48 to 69 (VTTKESNVGDSDTTENIKSPFN) are enriched in polar residues. The segment at 48 to 101 (VTTKESNVGDSDTTENIKSPFNGQWPFSRRSSQSSSHPVFEETHWSKHSKRPGK) is disordered. A phosphoserine mark is found at S109, S132, and S201.

Belongs to the BIT61 family. As to quaternary structure, the target of rapamycin complex 2 (TORC2) is composed of at least bit61, pop3/wat1, sin1, ste20 and tor1. Either Thr-23, Thr-25 or Ser-26 and Ser-78 or Ser-79 are phosphorylated as well.

The protein resides in the cytoplasm. It is found in the nucleus. Functionally, component of TORC2, which regulates multiple cellular processes to control cell growth in response to environmental signals. TORC2 is required for cell survival under various stress conditions. TORC2 positively controls G1 cell-cycle arrest, sexual development and amino acid uptake. Positively regulates amino acid uptake through the control of expression of amino acid permeases. The sequence is that of Target of rapamycin complex 2 subunit bit61 from Schizosaccharomyces pombe (strain 972 / ATCC 24843) (Fission yeast).